The chain runs to 250 residues: Cell division protein ZapD (250 aa).

It belongs to the ZapD family. Interacts with FtsZ.

It is found in the cytoplasm. Functionally, cell division factor that enhances FtsZ-ring assembly. Directly interacts with FtsZ and promotes bundling of FtsZ protofilaments, with a reduction in FtsZ GTPase activity. This Photorhabdus laumondii subsp. laumondii (strain DSM 15139 / CIP 105565 / TT01) (Photorhabdus luminescens subsp. laumondii) protein is Cell division protein ZapD.